Here is a 207-residue protein sequence, read N- to C-terminus: Claudin-11 (207 aa).

M1 is a topological domain (cytoplasmic). Residues 2–22 form a helical membrane-spanning segment; the sequence is VATCLQVVGFVTSFVGWIGVI. Over 23-82 the chain is Extracellular; it reads VTTSTNDWVVTCGYTIPTCRKLDELGSKGLWADCVMATGLYHCKPLVDILILPGYVQACR. Residues 83 to 103 traverse the membrane as a helical segment; sequence ALMIAASVLGLPAILLLLTVL. Topologically, residues 104–122 are cytoplasmic; the sequence is PCIRMGQEPGVAKYRRAQL. The helical transmembrane segment at 123–143 threads the bilayer; sequence AGVLLILLALCALVATIWFPV. Over 144–157 the chain is Extracellular; it reads CAHRETTIVSFGYS. A helical membrane pass occupies residues 158-178; it reads LYAGWIGAVLCLVGGCVILCC. Topologically, residues 179–207 are cytoplasmic; it reads AGDAQAFGENRFYYTAGSSSPTHAKSAHV. Residues S197 and S198 each carry the phosphoserine modification.

The protein belongs to the claudin family. In terms of assembly, interacts with tetraspanin-3/TSPAN3. Interacts with OCLN.

The protein resides in the cell junction. Its subcellular location is the tight junction. The protein localises to the cell membrane. Functionally, plays a major role in tight junction-specific obliteration of the intercellular space, through calcium-independent cell-adhesion activity. The chain is Claudin-11 (CLDN11) from Homo sapiens (Human).